The following is a 192-amino-acid chain: Protein GrpE (192 aa).

A disordered region spans residues 1-34; the sequence is MSSKEQKTPNEQVSEEMENAAEQQVEATQETGEG. Positions 21–31 are enriched in polar residues; that stretch reads AEQQVEATQET.

The protein belongs to the GrpE family. Homodimer.

It localises to the cytoplasm. Its function is as follows. Participates actively in the response to hyperosmotic and heat shock by preventing the aggregation of stress-denatured proteins, in association with DnaK and GrpE. It is the nucleotide exchange factor for DnaK and may function as a thermosensor. Unfolded proteins bind initially to DnaJ; upon interaction with the DnaJ-bound protein, DnaK hydrolyzes its bound ATP, resulting in the formation of a stable complex. GrpE releases ADP from DnaK; ATP binding to DnaK triggers the release of the substrate protein, thus completing the reaction cycle. Several rounds of ATP-dependent interactions between DnaJ, DnaK and GrpE are required for fully efficient folding. This Yersinia enterocolitica serotype O:8 / biotype 1B (strain NCTC 13174 / 8081) protein is Protein GrpE.